A 61-amino-acid chain; its full sequence is Small ribosomal subunit protein uS14 (61 aa).

Basic residues predominate over residues 1–14; sequence MAKTSQKVRNHRPA. The segment at 1 to 20 is disordered; it reads MAKTSQKVRNHRPAKFSSRE. Positions 24, 27, 40, and 43 each coordinate Zn(2+).

It belongs to the universal ribosomal protein uS14 family. Zinc-binding uS14 subfamily. As to quaternary structure, part of the 30S ribosomal subunit. Contacts proteins S3 and S10. Zn(2+) serves as cofactor.

Functionally, binds 16S rRNA, required for the assembly of 30S particles and may also be responsible for determining the conformation of the 16S rRNA at the A site. This is Small ribosomal subunit protein uS14 from Lactobacillus delbrueckii subsp. bulgaricus (strain ATCC 11842 / DSM 20081 / BCRC 10696 / JCM 1002 / NBRC 13953 / NCIMB 11778 / NCTC 12712 / WDCM 00102 / Lb 14).